The chain runs to 242 residues: Flavin prenyltransferase PAD1, mitochondrial (242 aa).

The transit peptide at 1–58 (MLLFPRRTNIAFFKTTGIFANFPLLGRTITTSPSFLTHKLSKEVTRASTSPPRPKRIV) directs the protein to the mitochondrion. Residues 63–65 (GAT), serine 89, 140–143 (SMKS), and arginine 175 contribute to the FMN site. Dimethylallyl phosphate contacts are provided by tyrosine 205 and arginine 221.

The protein belongs to the UbiX/PAD1 family. Oligomer.

It is found in the mitochondrion. It carries out the reaction dimethylallyl phosphate + FMNH2 = prenylated FMNH2 + phosphate. In terms of biological role, flavin prenyltransferase that catalyzes the synthesis of the prenylated FMN cofactor (prenyl-FMN) for the ferulic acid decarboxylase FDC1/ubiD. The prenyltransferase is metal-independent and links a dimethylallyl moiety from dimethylallyl monophosphate (DMAP) to the flavin N5 and C6 atoms of FMN. Involved in the decarboxylation of phenylacrylic acids like ferulic acid, p-coumaric acid or cinnamic acid, producing the corresponding vinyl derivatives which play the role of aroma metabolites. Also involved in the degradation of the food preservative sorbic acid (2,4-hexadienoic acid) to a volatile hydrocarbon, 1,3-pentadiene. Not essential for ubiquinone synthesis. Can rescue Q biosynthesis in E.coli strains lacking UbiX. Has mRNA binding activity. The protein is Flavin prenyltransferase PAD1, mitochondrial of Saccharomyces cerevisiae (strain ATCC 204508 / S288c) (Baker's yeast).